Here is a 244-residue protein sequence, read N- to C-terminus: 1-(5-phosphoribosyl)-5-[(5-phosphoribosylamino)methylideneamino] imidazole-4-carboxamide isomerase (244 aa).

Asp-8 functions as the Proton acceptor in the catalytic mechanism. Asp-130 acts as the Proton donor in catalysis.

It belongs to the HisA/HisF family.

The protein resides in the cytoplasm. The catalysed reaction is 1-(5-phospho-beta-D-ribosyl)-5-[(5-phospho-beta-D-ribosylamino)methylideneamino]imidazole-4-carboxamide = 5-[(5-phospho-1-deoxy-D-ribulos-1-ylimino)methylamino]-1-(5-phospho-beta-D-ribosyl)imidazole-4-carboxamide. Its pathway is amino-acid biosynthesis; L-histidine biosynthesis; L-histidine from 5-phospho-alpha-D-ribose 1-diphosphate: step 4/9. This is 1-(5-phosphoribosyl)-5-[(5-phosphoribosylamino)methylideneamino] imidazole-4-carboxamide isomerase from Syntrophomonas wolfei subsp. wolfei (strain DSM 2245B / Goettingen).